A 288-amino-acid chain; its full sequence is Prepilin leader peptidase/N-methyltransferase (288 aa).

The chain crosses the membrane as a helical span at residues 14 to 34; the sequence is FITLATVLGLLVGSFLNVVVY. Positions 71, 74, 96, and 99 each coordinate Zn(2+). 6 helical membrane passes run 103–123, 127–147, 158–178, 182–202, 227–247, and 254–274; these read ISVR…VVAW, ASVE…LSLI, IVLP…WVPL, VCGA…FKLV, VLPL…VYLL, and MGTA…AVLW.

This sequence belongs to the peptidase A24 family. Zn(2+) serves as cofactor.

It localises to the cell inner membrane. The enzyme catalyses Typically cleaves a -Gly-|-Phe- bond to release an N-terminal, basic peptide of 5-8 residues from type IV prepilin, and then N-methylates the new N-terminal amino group, the methyl donor being S-adenosyl-L-methionine.. Functionally, plays an essential role in type IV pili and type II pseudopili formation by proteolytically removing the leader sequence from substrate proteins and subsequently monomethylating the alpha-amino group of the newly exposed N-terminal phenylalanine. The chain is Prepilin leader peptidase/N-methyltransferase (pilD) from Pseudomonas putida (Arthrobacter siderocapsulatus).